The following is a 99-amino-acid chain: MRIGVVGDPDVVVGFRLAGLTDVYEVKSPEQAAKAIEELNNNSEIGLIITTERIGEQIRDSISGVKKIVVEVPDKNGPIVRENDPVKVLVRNAVGVDIK.

The protein belongs to the V-ATPase F subunit family. As to quaternary structure, has multiple subunits with at least A(3), B(3), C, D, E, F, H, I and proteolipid K(x).

The protein localises to the cell membrane. Component of the A-type ATP synthase that produces ATP from ADP in the presence of a proton gradient across the membrane. This Methanococcus maripaludis (strain C6 / ATCC BAA-1332) protein is A-type ATP synthase subunit F.